Here is a 111-residue protein sequence, read N- to C-terminus: Cell cycle protein GpsB (111 aa).

Residues 34 to 72 (LDMIIKDYEVFHKELEQLQQQNARLKRELEEQKLAAAQA) adopt a coiled-coil conformation.

This sequence belongs to the GpsB family. Forms polymers through the coiled coil domains. Interacts with PBP1, MreC and EzrA.

The protein resides in the cytoplasm. Divisome component that associates with the complex late in its assembly, after the Z-ring is formed, and is dependent on DivIC and PBP2B for its recruitment to the divisome. Together with EzrA, is a key component of the system that regulates PBP1 localization during cell cycle progression. Its main role could be the removal of PBP1 from the cell pole after pole maturation is completed. Also contributes to the recruitment of PBP1 to the division complex. Not essential for septum formation. The sequence is that of Cell cycle protein GpsB from Bacillus cytotoxicus (strain DSM 22905 / CIP 110041 / 391-98 / NVH 391-98).